We begin with the raw amino-acid sequence, 695 residues long: Polyribonucleotide nucleotidyltransferase (695 aa).

Residues aspartate 486 and aspartate 492 each coordinate Mg(2+). The KH domain occupies 553–612 (PRIETMQINTSKIATVIGPGGKQIRQIIERSGAQVDINDDGVINIAASTQESINKAKELI). Residues 622–690 (GKVYNGRVTS…EKGQLKLSHK (69 aa)) form the S1 motif domain.

The protein belongs to the polyribonucleotide nucleotidyltransferase family. The cofactor is Mg(2+).

The protein localises to the cytoplasm. It carries out the reaction RNA(n+1) + phosphate = RNA(n) + a ribonucleoside 5'-diphosphate. In terms of biological role, involved in mRNA degradation. Catalyzes the phosphorolysis of single-stranded polyribonucleotides processively in the 3'- to 5'-direction. In Chlamydia trachomatis serovar L2 (strain ATCC VR-902B / DSM 19102 / 434/Bu), this protein is Polyribonucleotide nucleotidyltransferase.